A 198-amino-acid polypeptide reads, in one-letter code: V-type proton ATPase subunit E (198 aa).

This sequence belongs to the V-ATPase E subunit family.

In terms of biological role, produces ATP from ADP in the presence of a proton gradient across the membrane. The sequence is that of V-type proton ATPase subunit E from Borrelia turicatae (strain 91E135).